The chain runs to 216 residues: Adenylate kinase (216 aa).

An ATP-binding site is contributed by 10–15 (GAGKGT). Positions 30-59 (STGDMLRAAVSAQTEVGKRAKAVMDAGKLV) are NMP. Residues T31, R36, 57–59 (KLV), 85–88 (GFPR), and Q92 contribute to the AMP site. Positions 126 to 163 (GRYTCANCGTGYHDENLKPKVEGVCDKCGSTHFKRRPD) are LID. R127 provides a ligand contact to ATP. Residues C130, C133, C150, and C153 each coordinate Zn(2+). AMP is bound by residues R160 and R172. A200 is a binding site for ATP.

The protein belongs to the adenylate kinase family. Monomer.

The protein localises to the cytoplasm. It carries out the reaction AMP + ATP = 2 ADP. It participates in purine metabolism; AMP biosynthesis via salvage pathway; AMP from ADP: step 1/1. Functionally, catalyzes the reversible transfer of the terminal phosphate group between ATP and AMP. Plays an important role in cellular energy homeostasis and in adenine nucleotide metabolism. This Allorhizobium ampelinum (strain ATCC BAA-846 / DSM 112012 / S4) (Agrobacterium vitis (strain S4)) protein is Adenylate kinase.